Consider the following 64-residue polypeptide: MSISVNCPTCQTKVEWSEKSPARPFCSERCKLIDLGEWANEEKSIPGEPVVIANDDYNNEESDY.

Zn(2+) is bound by residues C7, C10, C26, and C30. The segment at 44 to 64 (SIPGEPVVIANDDYNNEESDY) is disordered.

It belongs to the DNA gyrase inhibitor YacG family. In terms of assembly, interacts with GyrB. Zn(2+) is required as a cofactor.

Its function is as follows. Inhibits all the catalytic activities of DNA gyrase by preventing its interaction with DNA. Acts by binding directly to the C-terminal domain of GyrB, which probably disrupts DNA binding by the gyrase. The protein is DNA gyrase inhibitor YacG of Idiomarina loihiensis (strain ATCC BAA-735 / DSM 15497 / L2-TR).